The primary structure comprises 223 residues: MRLVIAQCTVDYVGRLTAHLPSARRLLLIKSDGSVSVHADDRAYKPLNWMSPPCRLSEESGDPHPVWVVENKTGEQLRITVEEIEHDSSHDLGVDPGLVKDGVEAHLQKLLAEHVELLGAGYTLVRREYMTAIGPVDLLCRDETGRSVAVEIKRRGEIDGVEQLTRYLELLNRDTLLAPVSGVFAAQQIKPQARTLANDRGIRCLILDYDQMRGMDSDEYRLF.

Belongs to the NucS endonuclease family.

The protein resides in the cytoplasm. Cleaves both 3' and 5' ssDNA extremities of branched DNA structures. This Mycobacterium sp. (strain JLS) protein is Endonuclease NucS.